We begin with the raw amino-acid sequence, 775 residues long: Beta-galactosidase 7 (775 aa).

The first 17 residues, 1–17 (MRGGMAITAALVVVAAA), serve as a signal peptide directing secretion. Glutamate 185 serves as the catalytic Proton donor. Residue glutamate 256 is the Nucleophile of the active site. N-linked (GlcNAc...) asparagine glycosylation is found at asparagine 257, asparagine 266, asparagine 277, asparagine 358, and asparagine 602. An SUEL-type lectin domain is found at 689-775 (RGKVPKVRIW…KSLLVVADCR (87 aa)).

The protein belongs to the glycosyl hydrolase 35 family.

Its subcellular location is the secreted. The protein localises to the extracellular space. It localises to the apoplast. It carries out the reaction Hydrolysis of terminal non-reducing beta-D-galactose residues in beta-D-galactosides.. The sequence is that of Beta-galactosidase 7 from Oryza sativa subsp. japonica (Rice).